Here is a 342-residue protein sequence, read N- to C-terminus: D-erythrose-4-phosphate dehydrogenase (342 aa).

11–12 (RV) contributes to the NAD(+) binding site. Substrate is bound by residues 153–155 (SCT), R199, 212–213 (TK), and R235. C154 functions as the Nucleophile in the catalytic mechanism. Position 317 (N317) interacts with NAD(+).

It belongs to the glyceraldehyde-3-phosphate dehydrogenase family. Epd subfamily. Homotetramer.

Its subcellular location is the cytoplasm. The catalysed reaction is D-erythrose 4-phosphate + NAD(+) + H2O = 4-phospho-D-erythronate + NADH + 2 H(+). It participates in cofactor biosynthesis; pyridoxine 5'-phosphate biosynthesis; pyridoxine 5'-phosphate from D-erythrose 4-phosphate: step 1/5. Catalyzes the NAD-dependent conversion of D-erythrose 4-phosphate to 4-phosphoerythronate. This is D-erythrose-4-phosphate dehydrogenase from Pseudoalteromonas atlantica (strain T6c / ATCC BAA-1087).